Here is a 689-residue protein sequence, read N- to C-terminus: Glycine--tRNA ligase beta subunit (689 aa).

This sequence belongs to the class-II aminoacyl-tRNA synthetase family. Tetramer of two alpha and two beta subunits.

It localises to the cytoplasm. It catalyses the reaction tRNA(Gly) + glycine + ATP = glycyl-tRNA(Gly) + AMP + diphosphate. This chain is Glycine--tRNA ligase beta subunit, found in Lacticaseibacillus paracasei (strain ATCC 334 / BCRC 17002 / CCUG 31169 / CIP 107868 / KCTC 3260 / NRRL B-441) (Lactobacillus paracasei).